A 310-amino-acid polypeptide reads, in one-letter code: Apolipoprotein E (310 aa).

A signal peptide spans 1–18 (MKALWAVLLATLLTGCLS). A run of 8 repeats spans residues 72–93 (VLME…EQLG), 94–115 (PVAE…ARLG), 116–137 (ADME…TMLG), 138–159 (QSTE…KRLM), 160–181 (RDAE…EGAE), 182–203 (RGVS…QRTA), 204–225 (NLGA…DRLR), and 226–247 (GRLE…EHME). The tract at residues 72–247 (VLMEDTMTEV…RLEEMREHME (176 aa)) is 8 X 22 AA approximate tandem repeats. Met135 is subject to Methionine sulfoxide. An LDL and other lipoprotein receptors binding region spans residues 150–160 (HLRKMRKRLMR). Positions 150 to 160 (HLRKMRKRLMR) are LDL receptor binding. 154–157 (MRKR) is a binding site for heparin. The tract at residues 202 to 282 (TANLGAGVAQ…GWFEPLVEDM (81 aa)) is lipid-binding and lipoprotein association. 221–228 (GDRLRGRL) contacts heparin. Positions 258-310 (QQIRLQAEIFQARLKGWFEPLVEDMQRQLANLVEKIQASTNSVLSTSVPQENQ) are homooligomerization. Residues 270 to 282 (RLKGWFEPLVEDM) form a specificity for association with VLDL region.

This sequence belongs to the apolipoprotein A1/A4/E family. In terms of assembly, homotetramer. May interact with ABCA1; functionally associated with ABCA1 in the biogenesis of HDLs. May interact with APP/A4 amyloid-beta peptide; the interaction is extremely stable in vitro but its physiological significance is unclear. May interact with MAPT. May interact with MAP2. In the cerebrospinal fluid, interacts with secreted SORL1. Interacts with PMEL; this allows the loading of PMEL luminal fragment on ILVs to induce fibril nucleation. APOE exists as multiple glycosylated and sialylated glycoforms within cells and in plasma. The extent of glycosylation and sialylation are tissue and context specific. Post-translationally, glycated in plasma VLDL. In terms of processing, phosphorylated by FAM20C in the extracellular medium.

The protein resides in the secreted. The protein localises to the extracellular space. It localises to the extracellular matrix. It is found in the extracellular vesicle. Its subcellular location is the endosome. The protein resides in the multivesicular body. In terms of biological role, APOE is an apolipoprotein, a protein associating with lipid particles, that mainly functions in lipoprotein-mediated lipid transport between organs via the plasma and interstitial fluids. APOE is a core component of plasma lipoproteins and is involved in their production, conversion and clearance. Apolipoproteins are amphipathic molecules that interact both with lipids of the lipoprotein particle core and the aqueous environment of the plasma. As such, APOE associates with chylomicrons, chylomicron remnants, very low density lipoproteins (VLDL) and intermediate density lipoproteins (IDL) but shows a preferential binding to high-density lipoproteins (HDL). It also binds a wide range of cellular receptors including the LDL receptor/LDLR, the LDL receptor-related proteins LRP1, LRP2 and LRP8 and the very low-density lipoprotein receptor/VLDLR that mediate the cellular uptake of the APOE-containing lipoprotein particles. Finally, APOE also has a heparin-binding activity and binds heparan-sulfate proteoglycans on the surface of cells, a property that supports the capture and the receptor-mediated uptake of APOE-containing lipoproteins by cells. A main function of APOE is to mediate lipoprotein clearance through the uptake of chylomicrons, VLDLs, and HDLs by hepatocytes. APOE is also involved in the biosynthesis by the liver of VLDLs as well as their uptake by peripheral tissues ensuring the delivery of triglycerides and energy storage in muscle, heart and adipose tissues. By participating in the lipoprotein-mediated distribution of lipids among tissues, APOE plays a critical role in plasma and tissues lipid homeostasis. APOE is also involved in two steps of reverse cholesterol transport, the HDLs-mediated transport of cholesterol from peripheral tissues to the liver, and thereby plays an important role in cholesterol homeostasis. First, it is functionally associated with ABCA1 in the biogenesis of HDLs in tissues. Second, it is enriched in circulating HDLs and mediates their uptake by hepatocytes. APOE also plays an important role in lipid transport in the central nervous system, regulating neuron survival and sprouting. This chain is Apolipoprotein E (Apoe), found in Grammomys surdaster (African woodland thicket rat).